The primary structure comprises 562 residues: Probable malate:quinone oxidoreductase (562 aa).

Residues 530–562 (EVPDKSATPPDPTIAPKHQHSPTHNANSEMQAL) form a disordered region. A compositionally biased stretch (polar residues) spans 551–562 (PTHNANSEMQAL).

The protein belongs to the MQO family. Requires FAD as cofactor.

It catalyses the reaction (S)-malate + a quinone = a quinol + oxaloacetate. It participates in carbohydrate metabolism; tricarboxylic acid cycle; oxaloacetate from (S)-malate (quinone route): step 1/1. This chain is Probable malate:quinone oxidoreductase, found in Xylella fastidiosa (strain 9a5c).